Reading from the N-terminus, the 431-residue chain is MYRFAPSPTGDMHIGNLRAAIFNYICARQKNMDFILRIEDTDKARNIAGKEEEIKEILNLFGISWQHYYIQSENLKFHRQMALKLISEKKAFACFCTEEELEAKKELAKKQGKAYRYDGTCEKLADIDVLECEKPFVIRLKKPTHTMKFTDFIKGELSFEPENIDSFVIMRTDKTPTYNFACAVDDMLENVTCIIRGEDHVSNTPKQEHIRASLGYNKAMTYAHLPIILNEEGVKMSKREAHSSVKWLLESGILPSAIANYLIMLGNKTPCEIFTLEEAIKWFDISKVSKAPARFDLKKLLQINREHIKMIKDDELNKILDLNKDLAQLAKFYTQEASTIKELKEKMRAIFNTKDFGEFETECKILKELLKDIELFENYEDFKNELLSKSDLKGKKFFMPLRIILTGNIHGPELGDLYPYIKNFIHELARI.

The 'HIGH' region motif lies at proline 6–asparagine 16. A 'KMSKS' region motif is present at residues lysine 235 to arginine 239. ATP is bound at residue lysine 238.

The protein belongs to the class-I aminoacyl-tRNA synthetase family. Glutamate--tRNA ligase type 1 subfamily. As to quaternary structure, monomer.

It localises to the cytoplasm. The catalysed reaction is tRNA(Glu) + L-glutamate + ATP = L-glutamyl-tRNA(Glu) + AMP + diphosphate. Its function is as follows. Catalyzes the attachment of glutamate to tRNA(Glu) in a two-step reaction: glutamate is first activated by ATP to form Glu-AMP and then transferred to the acceptor end of tRNA(Glu). The chain is Glutamate--tRNA ligase 1 from Campylobacter jejuni subsp. jejuni serotype O:6 (strain 81116 / NCTC 11828).